We begin with the raw amino-acid sequence, 141 residues long: Hemoglobin subunit alpha-A/A' (141 aa).

Residues 1–141 (VLSANDKTNV…VGNVLTAKYR (141 aa)) enclose the Globin domain. An O2-binding site is contributed by H58. Position 87 (H87) interacts with heme b.

The protein belongs to the globin family. In terms of assembly, heterotetramer of two alpha chains and two beta chains. In terms of tissue distribution, red blood cells.

Functionally, involved in oxygen transport from the lung to the various peripheral tissues. The sequence is that of Hemoglobin subunit alpha-A/A' (HBAA) from Gyps rueppelli (Rueppell's griffon).